The sequence spans 163 residues: 3-hydroxyacyl-[acyl-carrier-protein] dehydratase FabZ (163 aa).

Histidine 61 is a catalytic residue.

It belongs to the thioester dehydratase family. FabZ subfamily.

The protein resides in the cytoplasm. The enzyme catalyses a (3R)-hydroxyacyl-[ACP] = a (2E)-enoyl-[ACP] + H2O. Involved in unsaturated fatty acids biosynthesis. Catalyzes the dehydration of short chain beta-hydroxyacyl-ACPs and long chain saturated and unsaturated beta-hydroxyacyl-ACPs. This Dinoroseobacter shibae (strain DSM 16493 / NCIMB 14021 / DFL 12) protein is 3-hydroxyacyl-[acyl-carrier-protein] dehydratase FabZ.